Consider the following 502-residue polypeptide: L-ornithine N(5)-monooxygenase (502 aa).

Positions Met-1–Ile-10 are enriched in basic and acidic residues. Positions Met-1–Ala-34 are disordered. Residues Arg-13–Ser-26 show a composition bias toward polar residues. FAD is bound by residues Glu-83–His-91 and Gln-102. Residue Lys-107 participates in substrate binding. Val-168 serves as a coordination point for FAD. NADP(+) is bound by residues Ser-254–Ser-257 and Arg-279. Residues Asn-293–Phe-296 and Asn-323 each bind substrate. Asn-323–Ser-325 provides a ligand contact to NADP(+). Ser-466–Leu-468 serves as a coordination point for FAD. Position 469 (Ser-469) interacts with substrate.

Belongs to the lysine N(6)-hydroxylase/L-ornithine N(5)-oxygenase family. Homotetramer. Requires FAD as cofactor.

It catalyses the reaction L-ornithine + NADPH + O2 = N(5)-hydroxy-L-ornithine + NADP(+) + H2O. The enzyme catalyses L-ornithine + NADH + O2 = N(5)-hydroxy-L-ornithine + NAD(+) + H2O. The protein operates within siderophore biosynthesis. Catalyzes the conversion of L-ornithine to N(5)-hydroxyornithine, the first step in the biosynthesis of all hydroxamate-containing siderophores, such as deferriferrichrysin. The sequence is that of L-ornithine N(5)-monooxygenase from Aspergillus oryzae (strain ATCC 42149 / RIB 40) (Yellow koji mold).